Consider the following 191-residue polypeptide: Ribosome maturation factor RimM (191 aa).

Residues 99 to 172 form the PRC barrel domain; the sequence is TDEFYQIDLI…FLVVDPVAAG (74 aa).

The protein belongs to the RimM family. Binds ribosomal protein uS19.

The protein localises to the cytoplasm. An accessory protein needed during the final step in the assembly of 30S ribosomal subunit, possibly for assembly of the head region. Essential for efficient processing of 16S rRNA. May be needed both before and after RbfA during the maturation of 16S rRNA. It has affinity for free ribosomal 30S subunits but not for 70S ribosomes. This chain is Ribosome maturation factor RimM, found in Bartonella bacilliformis (strain ATCC 35685 / KC583 / Herrer 020/F12,63).